A 132-amino-acid chain; its full sequence is Proline-rich protein sgp2 (132 aa).

The signal sequence occupies residues 1 to 20; the sequence is MKYCFVFFVTLICLIANCSA. 2 disordered regions span residues 23–62 and 87–132; these read EGDK…SNSR and GASV…LGLP. Residues 36-47 show a composition bias toward basic and acidic residues; that stretch reads KQIERASDKTSE. Polar residues predominate over residues 51–62; sequence GNTNAQGDSNSR. The span at 91–105 shows a compositional bias: low complexity; it reads PQLPDLPTTPSLPDM.

Its subcellular location is the secreted. The polypeptide is Proline-rich protein sgp2 (sgp2) (Glossina morsitans morsitans (Savannah tsetse fly)).